Consider the following 141-residue polypeptide: Hemoglobin subunit alpha-1/2 (141 aa).

One can recognise a Globin domain in the interval 1 to 141; sequence VLSPTDKTNV…VSTVLTSKYR (141 aa). Serine 3 is subject to Phosphoserine. N6-succinyllysine is present on lysine 7. Threonine 8 carries the post-translational modification Phosphothreonine. Lysine 11 carries the N6-succinyllysine modification. Residue lysine 16 is modified to N6-acetyllysine; alternate. An N6-succinyllysine; alternate modification is found at lysine 16. The residue at position 24 (tyrosine 24) is a Phosphotyrosine. Position 40 is an N6-succinyllysine (lysine 40). Phosphoserine is present on serine 49. O2 is bound at residue histidine 58. Position 87 (histidine 87) interacts with heme b. Serine 102 is subject to Phosphoserine. The residue at position 108 (threonine 108) is a Phosphothreonine. Position 124 is a phosphoserine (serine 124). Residues threonine 134 and threonine 137 each carry the phosphothreonine modification. Serine 138 is modified (phosphoserine).

The protein belongs to the globin family. Heterotetramer of two alpha chains and two beta chains. In terms of tissue distribution, red blood cells.

Its function is as follows. Involved in oxygen transport from the lung to the various peripheral tissues. The sequence is that of Hemoglobin subunit alpha-1/2 from Tapirus terrestris (Lowland tapir).